Consider the following 150-residue polypeptide: Ribonuclease H (150 aa).

In terms of domain architecture, RNase H type-1 spans 1-146 (MPELFAYTDG…ADELARAGMA (146 aa)). Positions 9, 52, 74, and 138 each coordinate Mg(2+).

The protein belongs to the RNase H family. In terms of assembly, monomer. Mg(2+) serves as cofactor.

It localises to the cytoplasm. It carries out the reaction Endonucleolytic cleavage to 5'-phosphomonoester.. In terms of biological role, endonuclease that specifically degrades the RNA of RNA-DNA hybrids. The polypeptide is Ribonuclease H (Roseobacter denitrificans (strain ATCC 33942 / OCh 114) (Erythrobacter sp. (strain OCh 114))).